The following is a 264-amino-acid chain: Small ribosomal subunit protein eS1 (264 aa).

The residue at position 34 (Lys-34) is an N6-acetyllysine; alternate. Residue Lys-34 forms a Glycyl lysine isopeptide (Lys-Gly) (interchain with G-Cter in SUMO2); alternate linkage. Lys-56 carries the N6-acetyllysine modification. Tyr-155 carries the post-translational modification ADP-ribosyltyrosine. Residues 232 to 264 are disordered; sequence HGEGGSSGKTTGDETGAKVERADGYEPPVQESV. A Phosphoserine modification is found at Ser-237. Residues 242–255 are compositionally biased toward basic and acidic residues; it reads TGDETGAKVERADG. At Lys-249 the chain carries N6-acetyllysine; alternate. Residue Lys-249 forms a Glycyl lysine isopeptide (Lys-Gly) (interchain with G-Cter in SUMO2); alternate linkage. A Phosphotyrosine modification is found at Tyr-256. Position 263 is a phosphoserine (Ser-263).

Belongs to the eukaryotic ribosomal protein eS1 family. In terms of assembly, component of the small ribosomal subunit. Mature ribosomes consist of a small (40S) and a large (60S) subunit. The 40S subunit contains about 33 different proteins and 1 molecule of RNA (18S). The 60S subunit contains about 49 different proteins and 3 molecules of RNA (28S, 5.8S and 5S). Identified in a IGF2BP1-dependent mRNP granule complex containing untranslated mRNAs. Binds with high affinity to IPO4. Interacts with DDIT3. Part of the small subunit (SSU) processome, composed of more than 70 proteins and the RNA chaperone small nucleolar RNA (snoRNA) U3. In terms of processing, the protein designated S3b has the same amino acid sequence as S3a except that it lacks the C-terminal 12 residues. It is probable that S3a is converted by proteolysis, either physiologically or fortuitously, to S3b. ADP-ribosylated at Tyr-155 by PARP1 in presence of HPF1.

The protein resides in the cytoplasm. It is found in the nucleus. The protein localises to the nucleolus. Functionally, component of the small ribosomal subunit. The ribosome is a large ribonucleoprotein complex responsible for the synthesis of proteins in the cell. Part of the small subunit (SSU) processome, first precursor of the small eukaryotic ribosomal subunit. During the assembly of the SSU processome in the nucleolus, many ribosome biogenesis factors, an RNA chaperone and ribosomal proteins associate with the nascent pre-rRNA and work in concert to generate RNA folding, modifications, rearrangements and cleavage as well as targeted degradation of pre-ribosomal RNA by the RNA exosome. May play a role during erythropoiesis through regulation of transcription factor DDIT3. The sequence is that of Small ribosomal subunit protein eS1 (Rps3a) from Rattus norvegicus (Rat).